Consider the following 263-residue polypeptide: 3'-5' ssDNA/RNA exonuclease TatD (263 aa).

Residues Glu-91, His-127, and His-152 each contribute to the a divalent metal cation site.

It belongs to the metallo-dependent hydrolases superfamily. TatD-type hydrolase family. TatD subfamily. In terms of assembly, monomer. Mg(2+) serves as cofactor.

The protein localises to the cytoplasm. 3'-5' exonuclease that prefers single-stranded DNA and RNA. May play a role in the H(2)O(2)-induced DNA damage repair. The protein is 3'-5' ssDNA/RNA exonuclease TatD of Klebsiella pneumoniae (strain 342).